A 317-amino-acid chain; its full sequence is Protease 7 (317 aa).

The N-terminal stretch at 1-20 is a signal peptide; sequence MRAKLLGIVLTTPIAISSFA. Residues 21–31 are Periplasmic-facing; that stretch reads STETLSFTPDN. Residues 32 to 41 traverse the membrane as a beta stranded segment; sequence INADISLGTL. At 42-69 the chain is on the extracellular side; it reads SGKTKERVYLAEEGGRKVSQLDWKFNNA. The beta stranded transmembrane segment at 70–78 threads the bilayer; it reads AIIKGAINW. The Periplasmic segment spans residues 79-83; it reads DLMPQ. Residues 84–92 traverse the membrane as a beta stranded segment; sequence ISIGAAGWT. The Extracellular segment spans residues 93-130; that stretch reads TLGSRGGNMVDQDWMDSSNPGTWTDESRHPDTQLNYAN. Active-site residues include Asp103 and Asp105. The chain crosses the membrane as a beta stranded span at residues 131–140; the sequence is EFDLNIKGWL. Residues 141-145 are Periplasmic-facing; the sequence is LNEPN. The beta stranded transmembrane segment at 146-156 threads the bilayer; the sequence is YRLGLMAGYQE. The Extracellular segment spans residues 157–197; the sequence is SRYSFTARGGSYIYSSEEGFRDDIGSFPNGERAIGYKQRFK. Residues 198-209 traverse the membrane as a beta stranded segment; sequence MPYIGLTGSYRY. Residues 210-211 lie on the Periplasmic side of the membrane; it reads ED. Residues 212 to 221 traverse the membrane as a beta stranded segment; it reads FELGGTFKYS. Topologically, residues 222 to 250 are extracellular; that stretch reads GWVEASDNDEHYDPGKRITYRSKVKDQNY. Residues Asp230 and His232 contribute to the active site. Residues 251-261 form a beta stranded membrane-spanning segment; the sequence is YSVSVNAGYYV. The Periplasmic segment spans residues 262–264; sequence TPN. Residues 265–274 form a beta stranded membrane-spanning segment; the sequence is AKVYVEGTWN. The Extracellular segment spans residues 275-306; the sequence is RVTNKKGNTSLYDHNDNTSDYSKNGAGIENYN. A beta stranded membrane pass occupies residues 307–316; sequence FITTAGLKYT. Residue Phe317 is a topological domain, periplasmic.

This sequence belongs to the peptidase A26 family. As to quaternary structure, homopentamer.

It localises to the cell outer membrane. It catalyses the reaction Has a virtual requirement for Arg in the P1 position and a slightly less stringent preference for this residue in the P1' position, which can also contain Lys, Gly or Val.. With respect to regulation, inhibited by zinc. Protease that can cleave T7 RNA polymerase, ferric enterobactin receptor protein (FEP), antimicrobial peptide protamine and other proteins. This protease has a specificity for paired basic residues. The polypeptide is Protease 7 (ompT) (Escherichia coli O157:H7).